A 203-amino-acid polypeptide reads, in one-letter code: Small ribosomal subunit protein uS2 (203 aa).

Belongs to the universal ribosomal protein uS2 family.

The polypeptide is Small ribosomal subunit protein uS2 (Methanopyrus kandleri (strain AV19 / DSM 6324 / JCM 9639 / NBRC 100938)).